A 543-amino-acid chain; its full sequence is Cytochrome P450 52A1 (543 aa).

At 1-28 (MSSSPSIAQEFLATITPYVEYCQENYTK) the chain is on the lumenal side. The helical transmembrane segment at 29–48 (WYYFIPLVILSLNLISMLHT) threads the bilayer. Residues 49-543 (KYLERKFKAK…GAEVQMYLIL (495 aa)) lie on the Cytoplasmic side of the membrane. Cys-487 contacts heme.

Belongs to the cytochrome P450 family. Heme serves as cofactor.

It localises to the endoplasmic reticulum membrane. Together with an NADPH cytochrome P450 the enzyme system catalyzes the terminal hydroxylation as the first step in the assimilation of alkanes and fatty acids. The protein is Cytochrome P450 52A1 (CYP52A1) of Candida tropicalis (Yeast).